The chain runs to 58 residues: Small integral membrane protein 11 (58 aa).

Residues 9-29 traverse the membrane as a helical segment; the sequence is FPLLLYILAAKTLILCLAFAG. The stretch at 29–58 forms a coiled coil; it reads GVKVYQRKRLEAKQQKVEAEKRKQAEKKES.

Its subcellular location is the membrane. This Bos taurus (Bovine) protein is Small integral membrane protein 11 (SMIM11).